The sequence spans 772 residues: Mitochondrial intermediate peptidase (772 aa).

A mitochondrion-targeting transit peptide spans 1-42 (MFANSARNALKKRPQNLQPFRFQGCLFSKRANRPLTTKVQHL). H556 provides a ligand contact to Zn(2+). The active site involves E557. 2 residues coordinate Zn(2+): H560 and H563.

The protein belongs to the peptidase M3 family. Zn(2+) serves as cofactor.

The protein localises to the mitochondrion matrix. It catalyses the reaction Release of an N-terminal octapeptide as second stage of processing of some proteins imported into the mitochondrion.. Its function is as follows. Cleaves proteins, imported into the mitochondrion, to their mature size. While most mitochondrial precursor proteins are processed to the mature form in one step by mitochondrial processing peptidase (MPP), the sequential cleavage by MIP of an octapeptide after initial processing by MPP is a required step for a subgroup of nuclear-encoded precursor proteins destined for the matrix or the inner membrane. This chain is Mitochondrial intermediate peptidase (OCT1), found in Laccaria bicolor (strain S238N-H82 / ATCC MYA-4686) (Bicoloured deceiver).